A 200-amino-acid chain; its full sequence is FMN-dependent NADH:quinone oxidoreductase (200 aa).

Residues S10 and 95–98 each bind FMN; that span reads MYNF.

This sequence belongs to the azoreductase type 1 family. In terms of assembly, homodimer. It depends on FMN as a cofactor.

It catalyses the reaction 2 a quinone + NADH + H(+) = 2 a 1,4-benzosemiquinone + NAD(+). The enzyme catalyses N,N-dimethyl-1,4-phenylenediamine + anthranilate + 2 NAD(+) = 2-(4-dimethylaminophenyl)diazenylbenzoate + 2 NADH + 2 H(+). Its function is as follows. Quinone reductase that provides resistance to thiol-specific stress caused by electrophilic quinones. Also exhibits azoreductase activity. Catalyzes the reductive cleavage of the azo bond in aromatic azo compounds to the corresponding amines. The polypeptide is FMN-dependent NADH:quinone oxidoreductase (Alteromonas mediterranea (strain DSM 17117 / CIP 110805 / LMG 28347 / Deep ecotype)).